A 427-amino-acid chain; its full sequence is Light-independent protochlorophyllide reductase subunit N (427 aa).

3 residues coordinate [4Fe-4S] cluster: C28, C53, and C114.

This sequence belongs to the BchN/ChlN family. As to quaternary structure, protochlorophyllide reductase is composed of three subunits; BchL, BchN and BchB. Forms a heterotetramer of two BchB and two BchN subunits. [4Fe-4S] cluster is required as a cofactor.

The enzyme catalyses chlorophyllide a + oxidized 2[4Fe-4S]-[ferredoxin] + 2 ADP + 2 phosphate = protochlorophyllide a + reduced 2[4Fe-4S]-[ferredoxin] + 2 ATP + 2 H2O. Its pathway is porphyrin-containing compound metabolism; bacteriochlorophyll biosynthesis (light-independent). Its function is as follows. Component of the dark-operative protochlorophyllide reductase (DPOR) that uses Mg-ATP and reduced ferredoxin to reduce ring D of protochlorophyllide (Pchlide) to form chlorophyllide a (Chlide). This reaction is light-independent. The NB-protein (BchN-BchB) is the catalytic component of the complex. The chain is Light-independent protochlorophyllide reductase subunit N from Dinoroseobacter shibae (strain DSM 16493 / NCIMB 14021 / DFL 12).